Here is a 254-residue protein sequence, read N- to C-terminus: Phosphoribosylaminoimidazole-succinocarboxamide synthase (254 aa).

The protein belongs to the SAICAR synthetase family.

It carries out the reaction 5-amino-1-(5-phospho-D-ribosyl)imidazole-4-carboxylate + L-aspartate + ATP = (2S)-2-[5-amino-1-(5-phospho-beta-D-ribosyl)imidazole-4-carboxamido]succinate + ADP + phosphate + 2 H(+). It participates in purine metabolism; IMP biosynthesis via de novo pathway; 5-amino-1-(5-phospho-D-ribosyl)imidazole-4-carboxamide from 5-amino-1-(5-phospho-D-ribosyl)imidazole-4-carboxylate: step 1/2. This chain is Phosphoribosylaminoimidazole-succinocarboxamide synthase, found in Rhodospirillum centenum (strain ATCC 51521 / SW).